We begin with the raw amino-acid sequence, 333 residues long: DNA primase small subunit PriS (333 aa).

Active-site residues include Asp96, Asp98, and Asp237.

This sequence belongs to the eukaryotic-type primase small subunit family. In terms of assembly, heterodimer of a small subunit (PriS) and a large subunit (PriL). The cofactor is Mg(2+). Mn(2+) is required as a cofactor.

Catalytic subunit of DNA primase, an RNA polymerase that catalyzes the synthesis of short RNA molecules used as primers for DNA polymerase during DNA replication. The small subunit contains the primase catalytic core and has DNA synthesis activity on its own. Binding to the large subunit stabilizes and modulates the activity, increasing the rate of DNA synthesis while decreasing the length of the DNA fragments, and conferring RNA synthesis capability. The DNA polymerase activity may enable DNA primase to also catalyze primer extension after primer synthesis. May also play a role in DNA repair. In Thermoplasma volcanium (strain ATCC 51530 / DSM 4299 / JCM 9571 / NBRC 15438 / GSS1), this protein is DNA primase small subunit PriS.